The sequence spans 268 residues: Glucosamine-6-phosphate deaminase (268 aa).

The active-site Proton acceptor; for enolization step is the Asp-67. The For ring-opening step role is filled by Asn-137. The active-site Proton acceptor; for ring-opening step is the His-139. Glu-144 acts as the For ring-opening step in catalysis.

This sequence belongs to the glucosamine/galactosamine-6-phosphate isomerase family. NagB subfamily. In terms of assembly, homohexamer.

It catalyses the reaction alpha-D-glucosamine 6-phosphate + H2O = beta-D-fructose 6-phosphate + NH4(+). It functions in the pathway amino-sugar metabolism; N-acetylneuraminate degradation; D-fructose 6-phosphate from N-acetylneuraminate: step 5/5. Catalyzes the reversible isomerization-deamination of glucosamine 6-phosphate (GlcN6P) to form fructose 6-phosphate (Fru6P) and ammonium ion. This Colwellia psychrerythraea (strain 34H / ATCC BAA-681) (Vibrio psychroerythus) protein is Glucosamine-6-phosphate deaminase.